A 349-amino-acid polypeptide reads, in one-letter code: Isopentenyl-diphosphate delta-isomerase (349 aa).

Substrate is bound at residue 9–10; it reads RK. Residues 65 to 67, Ser-95, and Asn-124 each bind FMN; that span reads AMT. 95–97 is a substrate binding site; the sequence is STH. Gln-154 provides a ligand contact to substrate. A Mg(2+)-binding site is contributed by Glu-155. Residues Lys-186, Ser-211, Thr-216, 262 to 264, and 283 to 284 each bind FMN; these read GLR and SR.

Belongs to the IPP isomerase type 2 family. Homooctamer. Dimer of tetramers. FMN is required as a cofactor. Requires NADPH as cofactor. Mg(2+) serves as cofactor.

It is found in the cytoplasm. It catalyses the reaction isopentenyl diphosphate = dimethylallyl diphosphate. Functionally, involved in the biosynthesis of isoprenoids. Catalyzes the 1,3-allylic rearrangement of the homoallylic substrate isopentenyl (IPP) to its allylic isomer, dimethylallyl diphosphate (DMAPP). The chain is Isopentenyl-diphosphate delta-isomerase from Staphylococcus aureus (strain JH1).